The primary structure comprises 969 residues: Translation initiation factor IF-2 (969 aa).

The interval 50-370 is disordered; the sequence is SFASKSAPAN…QAPSVGGVRL (321 aa). A compositionally biased stretch (low complexity) spans 54–76; the sequence is KSAPANGAKPGPAASARPGAKPT. The segment covering 77–87 has biased composition (pro residues); that stretch reads PGGPRPGPRTP. Residues 88-102 show a composition bias toward low complexity; it reads APAASAPQAPAEQTA. The segment covering 112–124 has biased composition (pro residues); the sequence is AVKPGPAPTPARP. The segment covering 125-164 has biased composition (low complexity); sequence AAPEAPAAKAAPEAPAQRPTPGGPRPGQQQQRPGAPAQGG. Residues 240 to 267 show a composition bias toward pro residues; the sequence is PGGPRPSPGSMPPRPNPGAMPQRTPRPG. Residues 269–340 are compositionally biased toward gly residues; sequence SAGGRPGRPG…GAAGAFGRPG (72 aa). A compositionally biased stretch (basic residues) spans 344 to 353; that stretch reads RRGRKSKRQK. The tr-type G domain occupies 465-636; that stretch reads VRPPVVTVMG…AVLLTADAAL (172 aa). Residues 474–481 form a G1 region; sequence GHVDHGKT. 474–481 serves as a coordination point for GTP; that stretch reads GHVDHGKT. Positions 499 to 503 are G2; that stretch reads GITQH. Residues 524–527 are G3; it reads DTPG. GTP contacts are provided by residues 524 to 528 and 578 to 581; these read DTPGH and NKID. The tract at residues 578–581 is G4; that stretch reads NKID. Positions 614-616 are G5; that stretch reads SAK.

The protein belongs to the TRAFAC class translation factor GTPase superfamily. Classic translation factor GTPase family. IF-2 subfamily.

The protein localises to the cytoplasm. Functionally, one of the essential components for the initiation of protein synthesis. Protects formylmethionyl-tRNA from spontaneous hydrolysis and promotes its binding to the 30S ribosomal subunits. Also involved in the hydrolysis of GTP during the formation of the 70S ribosomal complex. The polypeptide is Translation initiation factor IF-2 (Nocardia farcinica (strain IFM 10152)).